The sequence spans 444 residues: Divalent metal cation transporter MntH (444 aa).

11 helical membrane-spanning segments follow: residues 39-59 (LLFAGPAVIASIAYVDPGNFA), 69-89 (GYTLLWVVAAANLIAMLFQAL), 109-128 (FSRPLVIALWIISEIAAMAT), 146-166 (LPLIIGMVATAMITFALLLFE), 175-195 (LVIGALVATIGLCYLAEMFIA), 215-235 (TALTIATGIVGATVMPHAVYL), 264-284 (VILALALAGMVNMAMVIMAAS), 304-324 (TPLLGAAAAAIFLISLITSGI), 346-366 (IPVWLRRLVTMVPAFIVILAG), 372-392 (ALVISQVILSIALPAPMIALI), and 417-437 (AAAIVLGLNMVLLIQAFGFTI).

Belongs to the NRAMP family.

The protein resides in the cell inner membrane. Functionally, h(+)-stimulated, divalent metal cation uptake system. The protein is Divalent metal cation transporter MntH of Granulibacter bethesdensis (strain ATCC BAA-1260 / CGDNIH1).